Consider the following 316-residue polypeptide: Pantothenate kinase (316 aa).

95–102 serves as a coordination point for ATP; that stretch reads GSVAVGKS.

This sequence belongs to the prokaryotic pantothenate kinase family.

The protein resides in the cytoplasm. It catalyses the reaction (R)-pantothenate + ATP = (R)-4'-phosphopantothenate + ADP + H(+). The protein operates within cofactor biosynthesis; coenzyme A biosynthesis; CoA from (R)-pantothenate: step 1/5. The protein is Pantothenate kinase of Shewanella sediminis (strain HAW-EB3).